The primary structure comprises 240 residues: Sulfite dehydrogenase subunit B (240 aa).

4Fe-4S ferredoxin-type domains lie at 4–34 (LALV…WAGP), 64–95 (TETV…KRPD), and 97–126 (GVVL…LDAQ). Residues Cys-13, Cys-16, Cys-19, Cys-23, Cys-73, Cys-76, Cys-81, Cys-85, Cys-106, Cys-109, Cys-112, and Cys-116 each contribute to the [4Fe-4S] cluster site.

Forms a heterotrimeric membrane-bound complex composed of a catalytic heterodimer (SoeAB) and a membrane anchor protein (SoeC). [4Fe-4S] cluster is required as a cofactor.

It is found in the cell inner membrane. In terms of biological role, part of the SoeABC complex that catalyzes the oxidation of sulfite to sulfate. SoeB is probably the electron transfer subunit. The sequence is that of Sulfite dehydrogenase subunit B from Allochromatium vinosum (strain ATCC 17899 / DSM 180 / NBRC 103801 / NCIMB 10441 / D) (Chromatium vinosum).